Reading from the N-terminus, the 347-residue chain is 4-hydroxy-2-oxovalerate aldolase (347 aa).

The 251-residue stretch at 2-252 (ILISDATLRD…DTRTTFERVM (251 aa)) folds into the Pyruvate carboxyltransferase domain. A substrate-binding site is contributed by 10–11 (RD). Aspartate 11 lines the Mn(2+) pocket. Residue histidine 14 is the Proton acceptor of the active site. Residues serine 164 and histidine 191 each coordinate substrate. The Mn(2+) site is built by histidine 191 and histidine 193.

This sequence belongs to the 4-hydroxy-2-oxovalerate aldolase family.

It carries out the reaction (S)-4-hydroxy-2-oxopentanoate = acetaldehyde + pyruvate. The sequence is that of 4-hydroxy-2-oxovalerate aldolase (mhpE) from Burkholderia pseudomallei (strain K96243).